Here is a 999-residue protein sequence, read N- to C-terminus: P3N-PIPO polyprotein (999 aa).

The region spanning 176–317 (LKKAVGSGKV…LDNVYTIEHY (142 aa)) is the Peptidase S30 domain. Active-site for P1 proteinase activity residues include His-230, Glu-239, and Ser-271. The short motif at 370–373 (KLSC) is the Involved in interaction with stylet and aphid transmission element. The Involved in virions binding and aphid transmission motif lies at 626-628 (PTK). One can recognise a Peptidase C6 domain in the interval 652 to 774 (MYIAKEGYCY…EGEMKHYRVG (123 aa)). Residues Cys-660 and His-733 each act as for helper component proteinase activity in the active site.

This sequence belongs to the potyviridae P3N-PIPO polyprotein family. Interacts (via PIPO domain) with host PCaP1 protein; this interaction may help to anchor the movement complex to the plasma membrane from which the complex could move to the plasmodesmata. Post-translationally, potyviral RNA is expressed as two polyproteins which undergo post-translational proteolytic processing. Genome polyprotein is processed by NIa-pro, P1 and HC-pro proteinases resulting in the production of at least ten individual proteins. P3N-PIPO is cleaved by P1 and HC-pro proteinases resulting in the production of three individual proteins. The P1 proteinase and the HC-pro cleave only their respective C-termini autocatalytically.

The protein resides in the host cell junction. The protein localises to the host plasmodesma. It catalyses the reaction Hydrolyzes a Gly-|-Gly bond at its own C-terminus, commonly in the sequence -Tyr-Xaa-Val-Gly-|-Gly, in the processing of the potyviral polyprotein.. Required for aphid transmission and also has proteolytic activity. Only cleaves a Gly-Gly dipeptide at its own C-terminus. Interacts with virions and aphid stylets. Acts as a suppressor of RNA-mediated gene silencing, also known as post-transcriptional gene silencing (PTGS), a mechanism of plant viral defense that limits the accumulation of viral RNAs. May have RNA-binding activity. Functionally, allows efficient cell to cell propagation, by bypassing the host cell wall barrier. Transports viral genome to neighboring plant cells directly through plasmosdesmata, without any budding. The protein is P3N-PIPO polyprotein of Phaseolus vulgaris (Kidney bean).